Here is a 270-residue protein sequence, read N- to C-terminus: Phosphatidate cytidylyltransferase (270 aa).

Helical transmembrane passes span 17-37 (FVVL…AILI), 55-75 (FFYV…FEEP), 81-101 (ILFI…SQVF), 104-124 (VAAF…FLPI), 129-149 (GAAN…FAYF), 170-190 (EGVI…RLVV), 193-213 (LLSV…TVAI), and 248-268 (IDGL…LEGV).

It belongs to the CDS family.

The protein resides in the cell membrane. The catalysed reaction is a 1,2-diacyl-sn-glycero-3-phosphate + CTP + H(+) = a CDP-1,2-diacyl-sn-glycerol + diphosphate. It participates in phospholipid metabolism; CDP-diacylglycerol biosynthesis; CDP-diacylglycerol from sn-glycerol 3-phosphate: step 3/3. This chain is Phosphatidate cytidylyltransferase (cdsA), found in Thermotoga maritima (strain ATCC 43589 / DSM 3109 / JCM 10099 / NBRC 100826 / MSB8).